The following is a 178-amino-acid chain: Large ribosomal subunit protein uL6 (178 aa).

The protein belongs to the universal ribosomal protein uL6 family. Part of the 50S ribosomal subunit.

This protein binds to the 23S rRNA, and is important in its secondary structure. It is located near the subunit interface in the base of the L7/L12 stalk, and near the tRNA binding site of the peptidyltransferase center. The chain is Large ribosomal subunit protein uL6 from Campylobacter hominis (strain ATCC BAA-381 / DSM 21671 / CCUG 45161 / LMG 19568 / NCTC 13146 / CH001A).